Consider the following 146-residue polypeptide: Core protein D2 (146 aa).

This sequence belongs to the orthopoxvirus OPG114 family. As to quaternary structure, part of a complex composed of the kinase OPG054, OPG092, OPG100, OPG114, OPG115, OPG142 and OPG157.

The protein resides in the virion. In terms of biological role, late protein which is part of a large complex required for early virion morphogenesis. This complex participates in the formation of virosomes and the incorporation of virosomal contents into nascent immature virions. The protein is Core protein D2 (OPG114) of Homo sapiens (Human).